The following is a 441-amino-acid chain: Putative F-box/FBD/LRR-repeat protein At4g00315 (441 aa).

Residues 1–47 enclose the F-box domain; the sequence is MDKTSQLPDELLVKVLSFLPTKDAVRTSLLSMRWKSLWMWLPKLEYD. LRR repeat units follow at residues 57 to 82, 87 to 115, 137 to 164, 165 to 190, 211 to 236, 243 to 271, 293 to 318, and 319 to 344; these read QGLARFITLSLLGHKAPAIESLSLKL, IGSIKPEDIYLWVSLAVHDSNVRELSLKL, ILKLKDEILVDVPRKVCLPSLKTLFLGR, VTYSDEDSLHRLLSNCPVLEDLVVER, LKMSCPCHLDGIMMNTPSLKYLKVTD, SDNESDSDSPRYFYDFEDMPKLEEADFVL, LGVYTEESLYHEGLVFNQLEQLKICS, and CDSDWSILLSRLLESSPNLRELEAYV. One can recognise an FBD domain in the interval 358 to 410; sequence QWGNQLNCVPKCLLSSLETFKWSEMYGLLQNQMDVAKYILRNARCLKSATIFF.

In Arabidopsis thaliana (Mouse-ear cress), this protein is Putative F-box/FBD/LRR-repeat protein At4g00315.